A 428-amino-acid chain; its full sequence is Enolase (428 aa).

Glutamine 173 serves as a coordination point for (2R)-2-phosphoglycerate. Residue glutamate 217 is the Proton donor of the active site. 3 residues coordinate Mg(2+): aspartate 253, glutamate 294, and aspartate 320. The (2R)-2-phosphoglycerate site is built by lysine 345, arginine 374, serine 375, and lysine 396. The active-site Proton acceptor is lysine 345.

This sequence belongs to the enolase family. Requires Mg(2+) as cofactor.

The protein localises to the cytoplasm. Its subcellular location is the secreted. It is found in the cell surface. It carries out the reaction (2R)-2-phosphoglycerate = phosphoenolpyruvate + H2O. Its pathway is carbohydrate degradation; glycolysis; pyruvate from D-glyceraldehyde 3-phosphate: step 4/5. Its function is as follows. Catalyzes the reversible conversion of 2-phosphoglycerate (2-PG) into phosphoenolpyruvate (PEP). It is essential for the degradation of carbohydrates via glycolysis. This is Enolase from Methanosarcina barkeri (strain Fusaro / DSM 804).